Reading from the N-terminus, the 353-residue chain is MTIALGKFTKDENDLFDIMDDWLRRDRFVFVGWSGLLLFPCAYFALGGWFTGTTFVTSWYTHGLASSYLEGCNFLTAAVSTPANSLAHSLLLLWGPEAQGDFTRWCQLGGLWTFVALHGAFGLIGFMLRQFELARSVQLRPYNAIAFSAPIAVFVSVFLIYPLGQSGWFFAPSFGVAAIFRFILFFQGFHNWTLNPFHMMGVAGVLGAALLCAIHGATVENTLFEDGDGANTFRAFNPTQAEETYSMVTANRFWSQIFGVAFSNKRWLHFFMLFVPVTGLWMSALGVVGLALNLRAYDFVSQEIRAAEDPEFETFYTKNILLNEGIRAWMAAQDQPHENLIFPEEVLPRGNAL.

Threonine 2 is subject to N-acetylthreonine. Position 2 is a phosphothreonine (threonine 2). The helical transmembrane segment at 41 to 61 (CAYFALGGWFTGTTFVTSWYT) threads the bilayer. Histidine 118 provides a ligand contact to chlorophyll a. The helical transmembrane segment at 125–141 (GFMLRQFELARSVQLRP) threads the bilayer. Residues glutamine 130 and asparagine 143 each contribute to the pheophytin a site. Residues 153-166 (VFVSVFLIYPLGQS) form a helical membrane-spanning segment. Histidine 198 contacts chlorophyll a. Residues 208–228 (AALLCAIHGATVENTLFEDGD) traverse the membrane as a helical segment. Positions 215 and 262 each coordinate a plastoquinone. Residue histidine 215 participates in Fe cation binding. A Fe cation-binding site is contributed by histidine 269. A helical transmembrane segment spans residues 279-295 (GLWMSALGVVGLALNLR).

Belongs to the reaction center PufL/M/PsbA/D family. In terms of assembly, PSII is composed of 1 copy each of membrane proteins PsbA, PsbB, PsbC, PsbD, PsbE, PsbF, PsbH, PsbI, PsbJ, PsbK, PsbL, PsbM, PsbT, PsbX, PsbY, PsbZ, Psb30/Ycf12, at least 3 peripheral proteins of the oxygen-evolving complex and a large number of cofactors. It forms dimeric complexes. It depends on The D1/D2 heterodimer binds P680, chlorophylls that are the primary electron donor of PSII, and subsequent electron acceptors. It shares a non-heme iron and each subunit binds pheophytin, quinone, additional chlorophylls, carotenoids and lipids. There is also a Cl(-1) ion associated with D1 and D2, which is required for oxygen evolution. The PSII complex binds additional chlorophylls, carotenoids and specific lipids. as a cofactor.

It is found in the plastid. It localises to the chloroplast thylakoid membrane. It carries out the reaction 2 a plastoquinone + 4 hnu + 2 H2O = 2 a plastoquinol + O2. In terms of biological role, photosystem II (PSII) is a light-driven water:plastoquinone oxidoreductase that uses light energy to abstract electrons from H(2)O, generating O(2) and a proton gradient subsequently used for ATP formation. It consists of a core antenna complex that captures photons, and an electron transfer chain that converts photonic excitation into a charge separation. The D1/D2 (PsbA/PsbD) reaction center heterodimer binds P680, the primary electron donor of PSII as well as several subsequent electron acceptors. D2 is needed for assembly of a stable PSII complex. In Coffea arabica (Arabian coffee), this protein is Photosystem II D2 protein.